The chain runs to 336 residues: Phosphate acyltransferase (336 aa).

This sequence belongs to the PlsX family. In terms of assembly, homodimer. Probably interacts with PlsY.

The protein localises to the cytoplasm. It catalyses the reaction a fatty acyl-[ACP] + phosphate = an acyl phosphate + holo-[ACP]. It participates in lipid metabolism; phospholipid metabolism. In terms of biological role, catalyzes the reversible formation of acyl-phosphate (acyl-PO(4)) from acyl-[acyl-carrier-protein] (acyl-ACP). This enzyme utilizes acyl-ACP as fatty acyl donor, but not acyl-CoA. The protein is Phosphate acyltransferase of Dictyoglomus turgidum (strain DSM 6724 / Z-1310).